The chain runs to 872 residues: Leucine--tRNA ligase (872 aa).

The 'HIGH' region signature appears at Pro-42–His-52. The 'KMSKS' region motif lies at Thr-634–Ser-638. Lys-637 lines the ATP pocket.

This sequence belongs to the class-I aminoacyl-tRNA synthetase family.

The protein localises to the cytoplasm. The catalysed reaction is tRNA(Leu) + L-leucine + ATP = L-leucyl-tRNA(Leu) + AMP + diphosphate. The polypeptide is Leucine--tRNA ligase (Nostoc sp. (strain PCC 7120 / SAG 25.82 / UTEX 2576)).